Reading from the N-terminus, the 79-residue chain is Acyl carrier protein (79 aa).

The Carrier domain maps to 2 to 77 (SDIGERVKKI…DATKFLEKNA (76 aa)). Serine 37 is modified (O-(pantetheine 4'-phosphoryl)serine).

Belongs to the acyl carrier protein (ACP) family. Post-translationally, 4'-phosphopantetheine is transferred from CoA to a specific serine of apo-ACP by AcpS. This modification is essential for activity because fatty acids are bound in thioester linkage to the sulfhydryl of the prosthetic group.

It is found in the cytoplasm. It participates in lipid metabolism; fatty acid biosynthesis. In terms of biological role, carrier of the growing fatty acid chain in fatty acid biosynthesis. This is Acyl carrier protein from Bradyrhizobium diazoefficiens (strain JCM 10833 / BCRC 13528 / IAM 13628 / NBRC 14792 / USDA 110).